The following is a 921-amino-acid chain: Protein translocase subunit SecA (921 aa).

Residues Gln-87, 105-109, and Asp-516 contribute to the ATP site; that span reads GEGKT. 4 residues coordinate Zn(2+): Cys-905, Cys-907, Cys-916, and His-917.

The protein belongs to the SecA family. In terms of assembly, monomer and homodimer. Part of the essential Sec protein translocation apparatus which comprises SecA, SecYEG and auxiliary proteins SecDF-YajC and YidC. It depends on Zn(2+) as a cofactor.

The protein localises to the cell inner membrane. It is found in the cytoplasm. The enzyme catalyses ATP + H2O + cellular proteinSide 1 = ADP + phosphate + cellular proteinSide 2.. In terms of biological role, part of the Sec protein translocase complex. Interacts with the SecYEG preprotein conducting channel. Has a central role in coupling the hydrolysis of ATP to the transfer of proteins into and across the cell membrane, serving both as a receptor for the preprotein-SecB complex and as an ATP-driven molecular motor driving the stepwise translocation of polypeptide chains across the membrane. In Albidiferax ferrireducens (strain ATCC BAA-621 / DSM 15236 / T118) (Rhodoferax ferrireducens), this protein is Protein translocase subunit SecA.